The sequence spans 163 residues: Outer membrane protein assembly factor BamE (163 aa).

Residues 1–22 form the signal peptide; it reads MINKKQSLTLLSAIALSVSLSA. Cysteine 23 carries N-palmitoyl cysteine lipidation. The S-diacylglycerol cysteine moiety is linked to residue cysteine 23. The tract at residues 122–163 is disordered; it reads EQSKLPMVNTTESAPQVPAQRPDEKPLVKENQTEAQVQKPIK. Basic and acidic residues predominate over residues 142-153; the sequence is RPDEKPLVKENQ.

Belongs to the BamE family. Part of the Bam complex.

Its subcellular location is the cell outer membrane. Its function is as follows. Part of the outer membrane protein assembly complex, which is involved in assembly and insertion of beta-barrel proteins into the outer membrane. This Shewanella oneidensis (strain ATCC 700550 / JCM 31522 / CIP 106686 / LMG 19005 / NCIMB 14063 / MR-1) protein is Outer membrane protein assembly factor BamE.